Here is a 188-residue protein sequence, read N- to C-terminus: Probable thymidylate kinase (188 aa).

Residue 11 to 18 (GIDGSGKT) participates in ATP binding.

The protein belongs to the thymidylate kinase family.

It carries out the reaction dTMP + ATP = dTDP + ADP. The polypeptide is Probable thymidylate kinase (tmk) (Methanocaldococcus jannaschii (strain ATCC 43067 / DSM 2661 / JAL-1 / JCM 10045 / NBRC 100440) (Methanococcus jannaschii)).